The chain runs to 542 residues: 2,3-bisphosphoglycerate-independent phosphoglycerate mutase (542 aa).

The Mn(2+) site is built by Asp24 and Ser74. Ser74 serves as the catalytic Phosphoserine intermediate. Substrate is bound by residues His135, 165–166 (RD), Arg197, Arg203, 268–271 (RPDR), and Lys341. Mn(2+)-binding residues include Asp408, His412, Asp449, His450, and His467.

It belongs to the BPG-independent phosphoglycerate mutase family. Monomer. The cofactor is Mn(2+).

It carries out the reaction (2R)-2-phosphoglycerate = (2R)-3-phosphoglycerate. It functions in the pathway carbohydrate degradation; glycolysis; pyruvate from D-glyceraldehyde 3-phosphate: step 3/5. In terms of biological role, catalyzes the interconversion of 2-phosphoglycerate and 3-phosphoglycerate. The polypeptide is 2,3-bisphosphoglycerate-independent phosphoglycerate mutase (Prochlorococcus marinus (strain NATL1A)).